The sequence spans 447 residues: Vasoactive intestinal polypeptide receptor (447 aa).

Over 1 to 103 (MCDVVNEIEL…VDDDSFFRSV (103 aa)) the chain is Extracellular. 3 disulfides stabilise this stretch: C15–C36, C27–C69, and C50–C86. N-linked (GlcNAc...) asparagine glycosylation is found at N17, N22, N64, and N91. Residues 104-128 (KIGYTIGHSVSLISLTTAIVILCMS) form a helical membrane-spanning segment. Residues 129–135 (RKLHCTR) are Cytoplasmic-facing. Residues 136-155 (NYIHMHLFVSFILKAIAVFV) traverse the membrane as a helical segment. The Extracellular segment spans residues 156–178 (KDAVLYDVIQESDNCSTASVGCK). N169 carries N-linked (GlcNAc...) asparagine glycosylation. An intrachain disulfide couples C177 to C247. A helical membrane pass occupies residues 179–202 (AVIVFFQYCIMASFFWLLVEGLYL). Topologically, residues 203–216 (HALLAVSFFSERKY) are cytoplasmic. The helical transmembrane segment at 217 to 238 (FWWYILIGWGGPTIFIMAWSFA) threads the bilayer. At 239–256 (KAYFNDVGCWDIIENSDL) the chain is on the extracellular side. The chain crosses the membrane as a helical span at residues 257-280 (FWWIIKTPILASILMNFILFICII). Over 281–305 (RILRQKINCPDIGRNESNQYSRLAK) the chain is Cytoplasmic. The chain crosses the membrane as a helical span at residues 306–325 (STLLLIPLFGINFIIFAFIP). Residues 326-337 (ENIKTELRLVFD) are Extracellular-facing. Residues 338–357 (LILGSFQGFVVAVLYCFLNG) form a helical membrane-spanning segment. The Cytoplasmic segment spans residues 358–447 (EVQAEIKRKW…KGHEDVREVS (90 aa)).

It belongs to the G-protein coupled receptor 2 family.

It is found in the cell membrane. Functionally, this is a receptor for VIP. The activity of this receptor is mediated by G proteins which activate adenylyl cyclase. This chain is Vasoactive intestinal polypeptide receptor (vipr1), found in Carassius auratus (Goldfish).